The following is a 459-amino-acid chain: Argininosuccinate lyase (459 aa).

Belongs to the lyase 1 family. Argininosuccinate lyase subfamily.

The protein resides in the cytoplasm. The enzyme catalyses 2-(N(omega)-L-arginino)succinate = fumarate + L-arginine. It participates in amino-acid biosynthesis; L-arginine biosynthesis; L-arginine from L-ornithine and carbamoyl phosphate: step 3/3. This Prochlorococcus marinus (strain MIT 9515) protein is Argininosuccinate lyase.